An 85-amino-acid chain; its full sequence is Large ribosomal subunit protein bL31B (85 aa).

Belongs to the bacterial ribosomal protein bL31 family. Type B subfamily. Part of the 50S ribosomal subunit.

This chain is Large ribosomal subunit protein bL31B, found in Staphylococcus saprophyticus subsp. saprophyticus (strain ATCC 15305 / DSM 20229 / NCIMB 8711 / NCTC 7292 / S-41).